The following is a 141-amino-acid chain: Hemoglobin subunit alpha (141 aa).

The Globin domain occupies 1–141 (VLSPADKTNV…VSTVLTSKYR (141 aa)). Ser-3 is subject to Phosphoserine. Lys-7 bears the N6-succinyllysine mark. The residue at position 8 (Thr-8) is a Phosphothreonine. Position 11 is an N6-succinyllysine (Lys-11). Lys-16 is modified (N6-acetyllysine; alternate). Lys-16 is subject to N6-succinyllysine; alternate. The residue at position 24 (Tyr-24) is a Phosphotyrosine. Ser-35 is modified (phosphoserine). Lys-40 carries the post-translational modification N6-succinyllysine. O2 is bound at residue His-58. Residue His-87 participates in heme b binding. Position 102 is a phosphoserine (Ser-102). Thr-108 is subject to Phosphothreonine. Phosphoserine occurs at positions 124 and 131. Phosphothreonine is present on residues Thr-134 and Thr-137. Position 138 is a phosphoserine (Ser-138).

The protein belongs to the globin family. In terms of assembly, heterotetramer of two alpha chains and two beta chains. Red blood cells.

Functionally, involved in oxygen transport from the lung to the various peripheral tissues. In terms of biological role, hemopressin acts as an antagonist peptide of the cannabinoid receptor CNR1. Hemopressin-binding efficiently blocks cannabinoid receptor CNR1 and subsequent signaling. The sequence is that of Hemoglobin subunit alpha (HBA) from Cynopterus sphinx (Indian short-nosed fruit bat).